The primary structure comprises 63 residues: Large ribosomal subunit protein uL29 (63 aa).

It belongs to the universal ribosomal protein uL29 family.

The chain is Large ribosomal subunit protein uL29 from Mannheimia succiniciproducens (strain KCTC 0769BP / MBEL55E).